Consider the following 271-residue polypeptide: Formamidopyrimidine-DNA glycosylase (271 aa).

Proline 2 serves as the catalytic Schiff-base intermediate with DNA. Glutamate 3 functions as the Proton donor in the catalytic mechanism. The active-site Proton donor; for beta-elimination activity is lysine 57. Residues histidine 90, arginine 109, and lysine 151 each contribute to the DNA site. The FPG-type zinc-finger motif lies at 236-270 (HVYGRGGETCTQCGNLLSEIKLGQRATVFCGLCQP). Catalysis depends on arginine 260, which acts as the Proton donor; for delta-elimination activity.

Belongs to the FPG family. As to quaternary structure, monomer. It depends on Zn(2+) as a cofactor.

The enzyme catalyses Hydrolysis of DNA containing ring-opened 7-methylguanine residues, releasing 2,6-diamino-4-hydroxy-5-(N-methyl)formamidopyrimidine.. It catalyses the reaction 2'-deoxyribonucleotide-(2'-deoxyribose 5'-phosphate)-2'-deoxyribonucleotide-DNA = a 3'-end 2'-deoxyribonucleotide-(2,3-dehydro-2,3-deoxyribose 5'-phosphate)-DNA + a 5'-end 5'-phospho-2'-deoxyribonucleoside-DNA + H(+). Its function is as follows. Involved in base excision repair of DNA damaged by oxidation or by mutagenic agents. Acts as a DNA glycosylase that recognizes and removes damaged bases. Has a preference for oxidized purines, such as 7,8-dihydro-8-oxoguanine (8-oxoG). Has AP (apurinic/apyrimidinic) lyase activity and introduces nicks in the DNA strand. Cleaves the DNA backbone by beta-delta elimination to generate a single-strand break at the site of the removed base with both 3'- and 5'-phosphates. This is Formamidopyrimidine-DNA glycosylase from Shewanella loihica (strain ATCC BAA-1088 / PV-4).